We begin with the raw amino-acid sequence, 317 residues long: Acetyl-coenzyme A carboxylase carboxyl transferase subunit beta (317 aa).

The region spanning 30-299 (LWTKCVACTA…VLPPLNVREK (270 aa)) is the CoA carboxyltransferase N-terminal domain. Cys34, Cys37, Cys53, and Cys56 together coordinate Zn(2+). The C4-type zinc-finger motif lies at 34-56 (CVACTALTYTKDLQANQLVCTEC).

This sequence belongs to the AccD/PCCB family. In terms of assembly, acetyl-CoA carboxylase is a heterohexamer composed of biotin carboxyl carrier protein (AccB), biotin carboxylase (AccC) and two subunits each of ACCase subunit alpha (AccA) and ACCase subunit beta (AccD). The cofactor is Zn(2+).

The protein resides in the cytoplasm. The enzyme catalyses N(6)-carboxybiotinyl-L-lysyl-[protein] + acetyl-CoA = N(6)-biotinyl-L-lysyl-[protein] + malonyl-CoA. The protein operates within lipid metabolism; malonyl-CoA biosynthesis; malonyl-CoA from acetyl-CoA: step 1/1. Its function is as follows. Component of the acetyl coenzyme A carboxylase (ACC) complex. Biotin carboxylase (BC) catalyzes the carboxylation of biotin on its carrier protein (BCCP) and then the CO(2) group is transferred by the transcarboxylase to acetyl-CoA to form malonyl-CoA. This chain is Acetyl-coenzyme A carboxylase carboxyl transferase subunit beta, found in Crocosphaera subtropica (strain ATCC 51142 / BH68) (Cyanothece sp. (strain ATCC 51142)).